The primary structure comprises 965 residues: Serine/threonine-protein kinase tousled-like 1 (965 aa).

Disordered regions lie at residues 1–22 (MSMLSMDGIVAGGGSSSGGGER), 35–72 (PQNKALPTVQSSGSSSNHAPIVGESPLGTVSSTMATGD), 95–120 (QNSSHPSTSVMMQQVPPQNGGATRSS), 172–292 (NHQQ…KQER), 320–402 (QNQG…QSGR), and 538–576 (RKPLGIGKEPKRPQAVNSQNDSNGMQPSTSSNTNGDDAI). Positions 10–21 (VAGGGSSSGGGE) are enriched in gly residues. The segment covering 42-52 (TVQSSGSSSNH) has biased composition (polar residues). The segment covering 172–231 (NHQQQMQQMHYHQQQQQYQQQQAQHHQMYAPQIQQQQQQPQQQSQQQSAQQPQQSSAALQ) has biased composition (low complexity). Polar residues-rich tracts occupy residues 233–244 (VNESSNLSSAGS) and 320–341 (QNQGSPKRQPAVQQNGSNSYDS). The span at 342–355 (QQQQPQMNQHEMQN) shows a compositional bias: low complexity. Positions 365 to 381 (LGVNNRGTPTPTQQQHY) are enriched in polar residues. Over residues 382–401 (SSDSNSNSNQSPPGQGNQSG) the composition is skewed to low complexity. The span at 552 to 572 (AVNSQNDSNGMQPSTSSNTNG) shows a compositional bias: polar residues. Residue serine 634 is modified to Phosphoserine. Residues 651 to 928 (YLMLNLLGKG…VFELAKHELF (278 aa)) enclose the Protein kinase domain. ATP is bound by residues 657–665 (LGKGGFSEV) and lysine 680. Aspartate 781 functions as the Proton acceptor in the catalytic mechanism.

Belongs to the protein kinase superfamily. Ser/Thr protein kinase family. Interacts with air-2. Autophosphorylates in vitro. Phosphorylation on Ser-634 by air-2 enhances catalytic activity.

It localises to the nucleus. It catalyses the reaction L-seryl-[protein] + ATP = O-phospho-L-seryl-[protein] + ADP + H(+). The enzyme catalyses L-threonyl-[protein] + ATP = O-phospho-L-threonyl-[protein] + ADP + H(+). In terms of biological role, essential for appropriate transcription during embryonic development. May act during transcription elongation to activate the RNA polymerase II large subunit (ama-1) by phosphorylating the Ser-2 residues of the C-terminal domain 7-residue repeats. Does not phosphorylate histone H3. This Caenorhabditis elegans protein is Serine/threonine-protein kinase tousled-like 1 (tlk-1).